A 412-amino-acid chain; its full sequence is Peptidase T (412 aa).

Zn(2+) is bound at residue His-78. Residue Asp-80 is part of the active site. Asp-140 is a Zn(2+) binding site. The active-site Proton acceptor is the Glu-173. Positions 174, 196, and 379 each coordinate Zn(2+).

It belongs to the peptidase M20B family. Zn(2+) serves as cofactor.

The protein localises to the cytoplasm. The enzyme catalyses Release of the N-terminal residue from a tripeptide.. In terms of biological role, cleaves the N-terminal amino acid of tripeptides. The polypeptide is Peptidase T (Edwardsiella ictaluri (strain 93-146)).